A 330-amino-acid polypeptide reads, in one-letter code: Phosphate acyltransferase (330 aa).

It belongs to the PlsX family. Homodimer. Probably interacts with PlsY.

It localises to the cytoplasm. It catalyses the reaction a fatty acyl-[ACP] + phosphate = an acyl phosphate + holo-[ACP]. It functions in the pathway lipid metabolism; phospholipid metabolism. In terms of biological role, catalyzes the reversible formation of acyl-phosphate (acyl-PO(4)) from acyl-[acyl-carrier-protein] (acyl-ACP). This enzyme utilizes acyl-ACP as fatty acyl donor, but not acyl-CoA. In Bacillus cereus (strain B4264), this protein is Phosphate acyltransferase.